We begin with the raw amino-acid sequence, 365 residues long: MEVCLPNGHQIVDWINNAFEGRVSIYSAQQGWDKTISAQPDMMVCGGAVVCMHCLGVVGSLQRKLKHLPHHKCNQQLRQQDYVDVQFADRVTAHWKRGMLSFVSQMHAIMNDVTPEELERVRTDGGSLAELNWLQVDPGSMFRSIHSSWTDPLQVVEDLDTQLDRYWTALNLMIDSSDLVPNFMMRDPSHAFNGVKLEGEARQTQFSRTFDSRSNLEWGVMIYDYSELERDPLKGRAYRKEVVTPARDFGHFGLSHYSRATTPILGKMPAVFSGMLTGNCKMYPFIKGTAKLRTVKKLVDAVNHTWGSEKIRYALGPGGMTGWYNRTMQQAPIVLTPAALTMFPDMTKFGDLQYPIMIGDPAVLG.

The CCHC-type zinc-finger motif lies at 51–73 (CMHCLGVVGSLQRKLKHLPHHKC).

It belongs to the orthoreovirus sigma-3 protein family. In terms of assembly, heterohexamer of three sigma-3 and three Mu-1 proteins. The RNA-binding form is probably a homodimer. Cleaved during virus the endosomal proteolytic disassembly of the outer capsid.

The protein localises to the virion. It is found in the host cytoplasm. Its subcellular location is the host nucleus. Its function is as follows. Stimulates translation by blocking the activation of the dsRNA-dependent protein kinase EIF2AK2/PKR, thereby inhibiting the host interferon response. Sigma3 prevents the activation of EIF2AK2 by competing with the kinase for dsRNA-binding. Functionally, the viral outer shell polypeptides, of which sigma-3 is one, impose structural constraints that prevent elongation of nascent transcripts by the RNA-dependent RNA polymerase lambda-3. This chain is Outer capsid protein sigma-3 (S4), found in Mammalia (T2J).